Reading from the N-terminus, the 214-residue chain is Pyridoxine/pyridoxamine 5'-phosphate oxidase (214 aa).

Substrate contacts are provided by residues arginine 9–tyrosine 12 and lysine 67. Residues arginine 62–lysine 67, phenylalanine 77–threonine 78, lysine 84, and glutamine 106 each bind FMN. 3 residues coordinate substrate: tyrosine 124, arginine 128, and serine 132. FMN is bound by residues glutamine 141–serine 142 and tryptophan 186. A substrate-binding site is contributed by arginine 192–histidine 194. An FMN-binding site is contributed by arginine 196.

Belongs to the pyridoxamine 5'-phosphate oxidase family. In terms of assembly, homodimer. FMN serves as cofactor.

It carries out the reaction pyridoxamine 5'-phosphate + O2 + H2O = pyridoxal 5'-phosphate + H2O2 + NH4(+). It catalyses the reaction pyridoxine 5'-phosphate + O2 = pyridoxal 5'-phosphate + H2O2. It functions in the pathway cofactor metabolism; pyridoxal 5'-phosphate salvage; pyridoxal 5'-phosphate from pyridoxamine 5'-phosphate: step 1/1. Its pathway is cofactor metabolism; pyridoxal 5'-phosphate salvage; pyridoxal 5'-phosphate from pyridoxine 5'-phosphate: step 1/1. Catalyzes the oxidation of either pyridoxine 5'-phosphate (PNP) or pyridoxamine 5'-phosphate (PMP) into pyridoxal 5'-phosphate (PLP). The chain is Pyridoxine/pyridoxamine 5'-phosphate oxidase from Microcystis aeruginosa (strain NIES-843 / IAM M-2473).